We begin with the raw amino-acid sequence, 126 residues long: Large ribosomal subunit protein eL18 (126 aa).

Belongs to the eukaryotic ribosomal protein eL18 family.

The sequence is that of Large ribosomal subunit protein eL18 from Methanosarcina mazei (strain ATCC BAA-159 / DSM 3647 / Goe1 / Go1 / JCM 11833 / OCM 88) (Methanosarcina frisia).